Here is a 213-residue protein sequence, read N- to C-terminus: MALEICVKAAVGAPDHLGDCPFSQRALLTLEEKSLTYKIHLINLSDKPQWFLDISPQGKVPVLKIDDKWVTDSDVIVGILEEKYPDPPLKTPAEFASVGSNIFGTFGTFLKSKDSNDGSEHALLVELEALENHLKSHDGPFIAGERVSAVDLSLAPKLYHLQVALGHFKSWSVPESFPHVHNYMKTLFSLDSFEKTKTEEKYVISGWAPKVNP.

Glutathione-binding residues include K8 and D19. The L-ascorbate site is built by K8 and D19. In terms of domain architecture, GST N-terminal spans 10–83; that stretch reads AVGAPDHLGD…DVIVGILEEK (74 aa). Residue C20 is the Nucleophile of the active site. Residue C20 is modified to S-glutathionyl cysteine. Positions 20-25 match the Glutathione-binding motif; that stretch reads CPFSQR. The glutathione site is built by K47, V60, and S73. The region spanning 84-213 is the GST C-terminal domain; that stretch reads YPDPPLKTPA…ISGWAPKVNP (130 aa). The Copper-binding motif lies at 133-137; that stretch reads HLKSH. Glutathione-binding residues include H160 and W207. K210 serves as a coordination point for L-ascorbate.

It belongs to the GST superfamily. DHAR family. Monomer. Interacts with copper (Cu). Spontaneous S-glutathionylation in the presence of oxidized glutathione (GSSG). As to expression, expressed at least in roots and leaves.

The protein resides in the mitochondrion. Its subcellular location is the cytoplasm. It localises to the cytosol. It is found in the peroxisome. The protein localises to the membrane. The catalysed reaction is RX + glutathione = an S-substituted glutathione + a halide anion + H(+). It carries out the reaction L-dehydroascorbate + 2 glutathione = glutathione disulfide + L-ascorbate. Displays a dual function. As a soluble protein, exhibits glutathione-dependent thiol transferase and dehydroascorbate (DHA) reductase activities. Key component of the ascorbate recycling system. Involved in the redox homeostasis, especially in scavenging of ROS under oxidative stresses, subsequently to biotic or abiotic inducers. As a peripheral membrane protein, could also function as voltage-gated ion channel. The protein is Glutathione S-transferase DHAR1, mitochondrial of Arabidopsis thaliana (Mouse-ear cress).